A 687-amino-acid chain; its full sequence is Polyphosphate kinase (687 aa).

Residue Asn45 participates in ATP binding. Mg(2+) is bound by residues Arg375 and Arg405. His435 functions as the Phosphohistidine intermediate in the catalytic mechanism. The ATP site is built by Tyr472, Arg568, and His596.

Belongs to the polyphosphate kinase 1 (PPK1) family. Requires Mg(2+) as cofactor. In terms of processing, an intermediate of this reaction is the autophosphorylated ppk in which a phosphate is covalently linked to a histidine residue through a N-P bond.

It catalyses the reaction [phosphate](n) + ATP = [phosphate](n+1) + ADP. In terms of biological role, catalyzes the reversible transfer of the terminal phosphate of ATP to form a long-chain polyphosphate (polyP). The sequence is that of Polyphosphate kinase from Burkholderia ambifaria (strain ATCC BAA-244 / DSM 16087 / CCUG 44356 / LMG 19182 / AMMD) (Burkholderia cepacia (strain AMMD)).